A 321-amino-acid polypeptide reads, in one-letter code: Urease accessory protein UreD (321 aa).

This sequence belongs to the UreD family. UreD, UreF and UreG form a complex that acts as a GTP-hydrolysis-dependent molecular chaperone, activating the urease apoprotein by helping to assemble the nickel containing metallocenter of UreC. The UreE protein probably delivers the nickel.

The protein resides in the cytoplasm. Required for maturation of urease via the functional incorporation of the urease nickel metallocenter. The polypeptide is Urease accessory protein UreD (Photorhabdus laumondii subsp. laumondii (strain DSM 15139 / CIP 105565 / TT01) (Photorhabdus luminescens subsp. laumondii)).